The chain runs to 329 residues: MAP kinase-activated protein kinase 2 (329 aa).

Residues 1–7 (LGINGKV) and K22 contribute to the ATP site. The Protein kinase domain occupies 1–254 (LGINGKVLRI…ITEFMNHPWI (254 aa)). 68–70 (ECL) is a binding site for staurosporine. D115 functions as the Proton acceptor in the catalytic mechanism. T151 carries the phosphothreonine; by MAPK14 modification. S201 bears the Phosphoserine; by MAPK14 mark. Position 257 is a phosphoserine; by autocatalysis (S257). Residues 257 to 293 (STKVPQTPLHTSRVLKEDKERWEDVKEEMTSALATMR) are autoinhibitory helix. Phosphothreonine; by MAPK14 is present on T263. A Glycyl lysine isopeptide (Lys-Gly) (interchain with G-Cter in SUMO) cross-link involves residue K282. A Nuclear export signal (NES) motif is present at residues 285–294 (MTSALATMRV). A p38 MAPK-binding site region spans residues 295 to 319 (DYEQIKIKKIEDASNPLLLKRRKKA). 2 consecutive short sequence motifs (bipartite nuclear localization signal) follow at residues 300 to 303 (KIKK) and 314 to 318 (KRRKK).

The protein belongs to the protein kinase superfamily. CAMK Ser/Thr protein kinase family. In terms of assembly, heterodimer with p38-alpha/MAPK14; this heterodimer forms a stable complex: molecules are positioned 'face to face' so that the ATP-binding sites of both kinases are at the heterodimer interface. Interacts with PHC2. Interacts with HSF1. Sumoylation inhibits the protein kinase activity. In terms of processing, phosphorylated and activated by MAP kinase p38-alpha/MAPK14 at Thr-151, Ser-201 and Thr-263.

It localises to the cytoplasm. The protein resides in the nucleus. It carries out the reaction L-seryl-[protein] + ATP = O-phospho-L-seryl-[protein] + ADP + H(+). The enzyme catalyses L-threonyl-[protein] + ATP = O-phospho-L-threonyl-[protein] + ADP + H(+). Its activity is regulated as follows. Activated following phosphorylation by p38-alpha/MAPK14 following various stresses. Inhibited following sumoylation. Specifically inhibited by pyrrolopyridine inhibitors. In terms of biological role, stress-activated serine/threonine-protein kinase involved in cytokine production, endocytosis, reorganization of the cytoskeleton, cell migration, cell cycle control, chromatin remodeling, DNA damage response and transcriptional regulation. Following stress, it is phosphorylated and activated by MAP kinase p38-alpha/MAPK14, leading to phosphorylation of substrates. Phosphorylates serine in the peptide sequence, Hyd-X-R-X(2)-S, where Hyd is a large hydrophobic residue. Phosphorylates ALOX5, CDC25B, CDC25C, CEP131, ELAVL1, HNRNPA0, HSP27/HSPB1, KRT18, KRT20, LIMK1, LSP1, PABPC1, PARN, PDE4A, RCSD1, RPS6KA3, TAB3 and TTP/ZFP36. Phosphorylates HSF1; leading to the interaction with HSP90 proteins and inhibiting HSF1 homotrimerization, DNA-binding and transactivation activities. Mediates phosphorylation of HSP27/HSPB1 in response to stress, leading to the dissociation of HSP27/HSPB1 from large small heat-shock protein (sHsps) oligomers and impairment of their chaperone activities and ability to protect against oxidative stress effectively. Involved in inflammatory response by regulating tumor necrosis factor (TNF) and IL6 production post-transcriptionally: acts by phosphorylating AU-rich elements (AREs)-binding proteins ELAVL1, HNRNPA0, PABPC1 and TTP/ZFP36, leading to regulation of the stability and translation of TNF and IL6 mRNAs. Phosphorylation of TTP/ZFP36, a major post-transcriptional regulator of TNF, promotes its binding to 14-3-3 proteins and reduces its ARE mRNA affinity, leading to inhibition of dependent degradation of ARE-containing transcripts. Phosphorylates CEP131 in response to cellular stress following ultraviolet irradiation which promotes binding of CEP131 to 14-3-3 proteins and inhibits formation of novel centriolar satellites. Also involved in late G2/M checkpoint following DNA damage through a process of post-transcriptional mRNA stabilization: following DNA damage, relocalizes from nucleus to cytoplasm and phosphorylates HNRNPA0 and PARN, leading to stabilization of GADD45A mRNA. Involved in toll-like receptor signaling pathway (TLR) in dendritic cells: required for acute TLR-induced macropinocytosis by phosphorylating and activating RPS6KA3. In Cricetulus longicaudatus (Long-tailed dwarf hamster), this protein is MAP kinase-activated protein kinase 2 (MAPKAPK2).